A 403-amino-acid chain; its full sequence is PP2A regulatory subunit TAP46 (403 aa).

2 disordered regions span residues E158–D184 and A351–G403. Composition is skewed to acidic residues over residues E174 to D184 and E366 to A375. Residues A376–P391 are compositionally biased toward basic and acidic residues.

Belongs to the IGBP1/TAP42 family. As to quaternary structure, interacts with NPP4 and NPP5, two catalytic subunits (subunit C) of PP2A.

It localises to the cytoplasm. The protein resides in the nucleus. Its function is as follows. Involved in the regulation of the TOR signaling pathway. Seems to act as a regulator of PP2A catalytic activity. This is PP2A regulatory subunit TAP46 from Nicotiana benthamiana.